The following is a 669-amino-acid chain: RNA-binding protein 14 (669 aa).

2 RRM domains span residues 1–73 (MKIF…MSRP) and 79–149 (WKIF…LSTK). Glycyl lysine isopeptide (Lys-Gly) (interchain with G-Cter in SUMO2) cross-links involve residues K126, K135, K138, K149, and K153. Disordered stretches follow at residues 148–175 (TKGQKKGPGLAIQSGDKTKKPGAGDTAF) and 193–232 (NSTGGFDGQARQPTPPFFGRDRSPLRRSPPRASYVAPLTA). S161 bears the Phosphoserine mark. N6-acetyllysine; alternate is present on K164. Residue K164 forms a Glycyl lysine isopeptide (Lys-Gly) (interchain with G-Cter in SUMO2); alternate linkage. Residue T206 is modified to Phosphothreonine. Residues S220, S242, S244, S256, S272, and S280 each carry the phosphoserine modification. Residues 284-303 (PYRGQLASPSSQSAAASSLG) form a disordered region. Over residues 287–303 (GQLASPSSQSAAASSLG) the composition is skewed to low complexity. Positions 307 to 354 (GAQPSASALSSYGGQPAAASSLNSYGAQGSSLASYGNQPSSYGAQAAS) are TRBP-interacting domain; interaction with STIL. Residues S520, S523, S527, and S562 each carry the phosphoserine modification. The segment at 569–590 (ANSTPPPYERTRLSPPRASYDD) is disordered. T572 carries the post-translational modification Phosphothreonine. S582 is modified (phosphoserine). K600 participates in a covalent cross-link: Glycyl lysine isopeptide (Lys-Gly) (interchain with G-Cter in SUMO2). A phosphoserine mark is found at S618, S620, S623, S627, S643, and S649.

In terms of assembly, interacts with NCOA6, CITED1 and XRCC5/KU86. Interacts with SS18. Interacts with STIL and interferes with its interaction with CPAP. Interacts with gamma-tubulin. Part of the HDP-RNP complex composed of at least HEXIM1, PRKDC, XRCC5, XRCC6, paraspeckle proteins (SFPQ, NONO, PSPC1, RBM14, and MATR3) and NEAT1 RNA.

It is found in the nucleus. The protein resides in the nucleolus. The protein localises to the cytoplasm. Its function is as follows. May function as a nuclear receptor coactivator, enhancing transcription through other coactivators such as NCOA6 and CITED1. Regulates centriole biogenesis by suppressing the formation of aberrant centriolar protein complexes in the cytoplasm and thus preserving mitotic spindle integrity. Prevents the formation of the STIL-CPAP complex (which can induce the formation of aberrant centriolar protein complexes) by interfering with the interaction of STIL with CPAP. Plays a role in the regulation of DNA virus-mediated innate immune response by assembling into the HDP-RNP complex, a complex that serves as a platform for IRF3 phosphorylation and subsequent innate immune response activation through the cGAS-STING pathway. This is RNA-binding protein 14 (RBM14) from Bos taurus (Bovine).